Reading from the N-terminus, the 448-residue chain is Probable D-serine dehydratase (448 aa).

Lysine 111 bears the N6-(pyridoxal phosphate)lysine mark.

It belongs to the serine/threonine dehydratase family. DsdA subfamily. The cofactor is pyridoxal 5'-phosphate.

It catalyses the reaction D-serine = pyruvate + NH4(+). This is Probable D-serine dehydratase from Rhizobium etli (strain CIAT 652).